We begin with the raw amino-acid sequence, 531 residues long: Na(+)/H(+) antiporter NhaB (531 aa).

Helical transmembrane passes span 13-33 (FLGK…IINP), 34-54 (LVFF…EFIF), 90-110 (LVAN…IYFM), 121-141 (ILIG…TAAF), 145-165 (FLDA…FYAI), 206-226 (LLMH…VGEP), 242-262 (FIIR…LTCV), 308-328 (VIAV…GLIG), 352-372 (EEAL…AVII), 394-414 (LALF…VFVG), 456-476 (GQAA…QLSY), and 482-502 (MALP…SFLL).

The protein belongs to the NhaB Na(+)/H(+) (TC 2.A.34) antiporter family.

The protein localises to the cell inner membrane. It catalyses the reaction 2 Na(+)(in) + 3 H(+)(out) = 2 Na(+)(out) + 3 H(+)(in). In terms of biological role, na(+)/H(+) antiporter that extrudes sodium in exchange for external protons. This chain is Na(+)/H(+) antiporter NhaB, found in Aliivibrio salmonicida (strain LFI1238) (Vibrio salmonicida (strain LFI1238)).